The chain runs to 368 residues: CST complex subunit STN1 (368 aa).

The interaction with CTC1 stretch occupies residues 2 to 192 (AVSLGDDDAD…KCYDQPFKMP (191 aa)). Residues 58-162 (VDVLGIVVYK…EIKATSFYKV (105 aa)) constitute a DNA-binding region (OB). Winged helix-turn-helix (wHTH) regions lie at residues 201-295 (AGGS…NVTE) and 296-368 (QDKD…YIVL).

It belongs to the CTC1 family. As to quaternary structure, component of the CST complex.

It is found in the nucleus. The protein resides in the chromosome. Its subcellular location is the telomere. In terms of biological role, component of the CST complex proposed to act as a specialized replication factor promoting DNA replication under conditions of replication stress or natural replication barriers such as the telomere duplex. The CST complex binds single-stranded DNA with high affinity in a sequence-independent manner, while isolated subunits bind DNA with low affinity by themselves. Initially the CST complex has been proposed to protect telomeres from DNA degradation. However, the CST complex has been shown to be involved in several aspects of telomere replication. This is CST complex subunit STN1 from Danio rerio (Zebrafish).